The primary structure comprises 883 residues: Phosphoenolpyruvate carboxylase (883 aa).

Catalysis depends on residues His-138 and Lys-546.

It belongs to the PEPCase type 1 family. It depends on Mg(2+) as a cofactor.

It carries out the reaction oxaloacetate + phosphate = phosphoenolpyruvate + hydrogencarbonate. Forms oxaloacetate, a four-carbon dicarboxylic acid source for the tricarboxylic acid cycle. This is Phosphoenolpyruvate carboxylase from Escherichia coli O81 (strain ED1a).